We begin with the raw amino-acid sequence, 352 residues long: C-C chemokine receptor type 5 (352 aa).

Over 1-30 (MVYQVSSPTYDIDYYTSEPCQKINVKQIAA) the chain is Extracellular. At Tyr3 the chain carries Sulfotyrosine. O-linked (GalNAc...) serine glycosylation is found at Ser6 and Ser7. Tyr10, Tyr14, and Tyr15 each carry sulfotyrosine. Cystine bridges form between Cys20-Cys269 and Cys101-Cys178. A helical membrane pass occupies residues 31 to 58 (RLLPPLYSLVFIFGFVGNILVVLILINC). The Cytoplasmic segment spans residues 59–68 (KRLKSMTDIY). Residues 69–89 (LLNLAISDLLFLLTIPFWAHY) traverse the membrane as a helical segment. The Extracellular segment spans residues 90-102 (AAAQWDFGNTMCQ). A helical membrane pass occupies residues 103-124 (LLTGLYLIGFFSGIFFIILLTI). Topologically, residues 125-141 (DRYLAIVHAVFALKART) are cytoplasmic. The helical transmembrane segment at 142-166 (VTFGLVTSVITWVVAVFASLPGIIF) threads the bilayer. Topologically, residues 167-198 (TRSQREGLHYTCSSHFPSSQYQFWKNFQTLKI) are extracellular. A helical transmembrane segment spans residues 199-218 (VILGLVLPLLVMVICYSGIL). At 219–235 (KTLLRCRNEKKRHRAVR) the chain is on the cytoplasmic side. A helical membrane pass occupies residues 236–260 (LIFTIMIVYFLFWAPYNIVLLLNTF). Topologically, residues 261–277 (QEFFGLNNCSSSNRLDQ) are extracellular. The chain crosses the membrane as a helical span at residues 278–301 (AMQVTETLGMTHCCINPIIYAFVG). At 302 to 352 (EKFRNYLLVFFQKHLAKRFCKCCSISQQEAPERASSVYTRSTGEQETTVGL) the chain is on the cytoplasmic side. 3 S-palmitoyl cysteine lipidation sites follow: Cys321, Cys323, and Cys324. 3 positions are modified to phosphoserine; by BARK1: Ser336, Ser337, and Ser342.

The protein belongs to the G-protein coupled receptor 1 family. Interacts with PRAF2. Efficient ligand binding to CCL3/MIP-1alpha and CCL4/MIP-1beta requires sulfation, O-glycosylation and sialic acid modifications. Glycosylation on Ser-6 is required for efficient binding of CCL4. Interacts with GRK2. Interacts with ARRB1 and ARRB2. Interacts with CNIH4. Interacts with S100A4; this interaction stimulates T-lymphocyte chemotaxis. Post-translationally, sulfated on at least 2 of the N-terminal tyrosines. Sulfation is required for efficient binding of the chemokines, CCL3 and CCL4. In terms of processing, palmitoylation in the C-terminal is important for cell surface expression. Phosphorylation on serine residues in the C-terminal is stimulated by binding CC chemokines especially by APO-RANTES. Post-translationally, O-glycosylated, but not N-glycosylated. Ser-6 appears to be the major site even if Ser-7 may be also O-glycosylated. Also sialylated glycans present which contribute to chemokine binding. Thr-16 and Ser-17 may also be glycosylated and, if so, with small moieties such as a T-antigen.

The protein localises to the cell membrane. Functionally, receptor for a number of inflammatory CC-chemokines including CCL3/MIP-1-alpha, CCL4/MIP-1-beta and RANTES and subsequently transduces a signal by increasing the intracellular calcium ion level. May play a role in the control of granulocytic lineage proliferation or differentiation. Participates in T-lymphocyte migration to the infection site by acting as a chemotactic receptor. The sequence is that of C-C chemokine receptor type 5 (CCR5) from Allochrocebus solatus (Sun-tailed monkey).